A 328-amino-acid chain; its full sequence is dITP/XTP pyrophosphatase (328 aa).

The tract at residues 1–129 is unknown; it reads MSEKIYEYKD…ATSEQGFGDI (129 aa). The NTP pyrophosphatase stretch occupies residues 130–324; the sequence is ILIATRNEGK…KLMEVFPAWQ (195 aa). 134–139 lines the substrate pocket; sequence TRNEGK. The active-site Proton acceptor is Asp-196. Residue Asp-196 coordinates Mg(2+). Substrate is bound by residues Ser-197, 280–283, Lys-303, and 308–309; these read FGYD and HR.

Belongs to the HAM1 NTPase family. As to quaternary structure, homodimer. Requires Mg(2+) as cofactor.

It carries out the reaction XTP + H2O = XMP + diphosphate + H(+). The catalysed reaction is dITP + H2O = dIMP + diphosphate + H(+). The enzyme catalyses ITP + H2O = IMP + diphosphate + H(+). Functionally, pyrophosphatase that catalyzes the hydrolysis of nucleoside triphosphates to their monophosphate derivatives, with a high preference for the non-canonical purine nucleotides XTP (xanthosine triphosphate), dITP (deoxyinosine triphosphate) and ITP. Seems to function as a house-cleaning enzyme that removes non-canonical purine nucleotides from the nucleotide pool, thus preventing their incorporation into DNA/RNA and avoiding chromosomal lesions. The sequence is that of dITP/XTP pyrophosphatase from Streptococcus pyogenes serotype M3 (strain ATCC BAA-595 / MGAS315).